Consider the following 424-residue polypeptide: Enolase (424 aa).

Gln-165 is a (2R)-2-phosphoglycerate binding site. Glu-207 acts as the Proton donor in catalysis. Mg(2+) is bound by residues Asp-244, Glu-283, and Asp-310. (2R)-2-phosphoglycerate is bound by residues Lys-335, Arg-364, Ser-365, and Lys-386. The Proton acceptor role is filled by Lys-335.

The protein belongs to the enolase family. Requires Mg(2+) as cofactor.

The protein localises to the cytoplasm. Its subcellular location is the secreted. The protein resides in the cell surface. It carries out the reaction (2R)-2-phosphoglycerate = phosphoenolpyruvate + H2O. The protein operates within carbohydrate degradation; glycolysis; pyruvate from D-glyceraldehyde 3-phosphate: step 4/5. Its function is as follows. Catalyzes the reversible conversion of 2-phosphoglycerate (2-PG) into phosphoenolpyruvate (PEP). It is essential for the degradation of carbohydrates via glycolysis. The sequence is that of Enolase from Chlamydia abortus (strain DSM 27085 / S26/3) (Chlamydophila abortus).